The primary structure comprises 1776 residues: 6-methylsalicylic acid synthase (1776 aa).

Over residues 1–18 (MHSVSPSTYPSGGTSPAP) the composition is skewed to low complexity. The interval 1–26 (MHSVSPSTYPSGGTSPAPADTPGTEY) is disordered. In terms of domain architecture, Ketosynthase family 3 (KS3) spans 32–457 (SNDVAVVGMA…GTVSHAVIEE (426 aa)). Catalysis depends on for beta-ketoacyl synthase activity residues cysteine 204, histidine 339, and histidine 379. Positions 567 to 880 (VWVFSGHGAQ…IAQLHCRGAE (314 aa)) are malonyl-CoA:ACP transacylase (MAT) domain. The tract at residues 925–1044 (HTLLGQRIPV…AYWDRKVLGS (120 aa)) is N-terminal hotdog fold. The tract at residues 925–1196 (HTLLGQRIPV…FTAMRFSEIE (272 aa)) is dehydratase (DH) domain. The PKS/mFAS DH domain maps to 925 to 1201 (HTLLGQRIPV…FSEIEGTPGV (277 aa)). The active-site Proton acceptor; for dehydratase activity is the histidine 957. The segment at 1058 to 1201 (TTKLADNFSI…FSEIEGTPGV (144 aa)) is C-terminal hotdog fold. Aspartate 1113 functions as the Proton donor; for dehydratase activity in the catalytic mechanism. A product template (PT) domain region spans residues 1205 to 1657 (MESLVHQIAW…LRSLAIDDGE (453 aa)). A Carrier domain is found at 1700–1774 (AYLDEKIRGC…HLVVWFAEKI (75 aa)). Serine 1734 bears the O-(pantetheine 4'-phosphoryl)serine mark.

Its subcellular location is the cytoplasm. It is found in the cytosol. It catalyses the reaction 3 malonyl-CoA + acetyl-CoA + NADPH + 3 H(+) = 6-methylsalicylate + 3 CO2 + NADP(+) + 4 CoA + H2O. The protein operates within mycotoxin biosynthesis; patulin biosynthesis. 6-methylsalicylic acid synthase; part of the gene cluster that mediates the biosynthesis of patulin, an acetate-derived tetraketide mycotoxin produced by several fungal species that shows antimicrobial properties against several bacteria. PatK catalyzes the first step of the pathway which is the synthesis of 6-methylsalicylic acid via condensation of 1 acetate and 3 malonate units. The pathway begins with the synthesis of 6-methylsalicylic acid by the polyketide synthase (PKS) patK via condensation of acetate and malonate units. The 6-methylsalicylic acid decarboxylase patG then catalyzes the decarboxylation of 6-methylsalicylic acid to yield m-cresol (also known as 3-methylphenol). These first reactions occur in the cytosol. The intermediate m-cresol is then transported into the endoplasmic reticulum where the cytochrome P450 monooxygenase patH converts it to m-hydroxybenzyl alcohol, which is further converted to gentisyl alcohol by the cytochrome P450 monooxygenase patI. The oxidoreductases patJ and patO further convert gentisyl alcohol to isoepoxydon in the vacuole. PatN catalyzes then the transformation of isoepoxydon into phyllostine. The cluster protein patF is responsible for the conversion from phyllostine to neopatulin whereas the alcohol dehydrogenase patD converts neopatulin to E-ascladiol. The steps between isoepoxydon and E-ascladiol occur in the cytosol, and E-ascladiol is probably secreted to the extracellular space by one of the cluster-specific transporters patC or patM. Finally, the secreted patulin synthase patE catalyzes the conversion of E-ascladiol to patulin. This chain is 6-methylsalicylic acid synthase, found in Penicillium expansum (Blue mold rot fungus).